Reading from the N-terminus, the 350-residue chain is Fe(3+) ions import ATP-binding protein FbpC (350 aa).

The ABC transporter domain occupies 4–236 (LDIINLSKSF…PNDEQTAHFL (233 aa)). 36-43 (GPSGSGKT) is a binding site for ATP.

This sequence belongs to the ABC transporter superfamily. Fe(3+) ion importer (TC 3.A.1.10) family. In terms of assembly, the complex is composed of two ATP-binding proteins (FbpC), two transmembrane proteins (FbpB) and a solute-binding protein (FbpA).

The protein localises to the cell inner membrane. It catalyses the reaction Fe(3+)(out) + ATP + H2O = Fe(3+)(in) + ADP + phosphate + H(+). Its function is as follows. Part of the ABC transporter complex FbpABC involved in Fe(3+) ions import. Responsible for energy coupling to the transport system. In Pseudomonas fluorescens (strain Pf0-1), this protein is Fe(3+) ions import ATP-binding protein FbpC.